We begin with the raw amino-acid sequence, 370 residues long: MEILMTVSKFASICTMGANASALEKEIGPEQFPVNEHYFGLVNFGNTCYCNSVLQALYFCRPFRDKVLAYKSQPRKKESLLTCLADLFHSIATQKKKVGVIPPKKFITRLRKENELFDNYMQQDAHEFLNYLLNTIADILQEERKQEKQNGRLRNGDVDSEDNNSTPDPTWVHEIFQGTLTNETRCLTCETISSKDEDFLDLSVDVEQNTSITHCLRGFSNTETLCSEYKYYCEECRSKQEAHKRMKVKKLPMILALHLKRFKYMDQLHRYTKLSYRVVFPLELRLFNTSGDATNPDRMYDLVAVVVHCGSGPNRGHYIAIVKSHDFWLLFDDDIVEKIDAQAIEEFYGLTSDISKNSESGYILFYQSRD.

Residues 1-4 (MEIL) carry the Required for plasma membrane localization of USP12/WDR20 motif. A USP domain is found at 39 to 369 (FGLVNFGNTC…SGYILFYQSR (331 aa)). The active-site Nucleophile is the cysteine 48. Residues 146–157 (QEKQNGRLRNGD) show a composition bias toward basic and acidic residues. The interval 146 to 168 (QEKQNGRLRNGDVDSEDNNSTPD) is disordered. Residues cysteine 186, cysteine 189, cysteine 233, and cysteine 236 each coordinate Zn(2+). Histidine 317 serves as the catalytic Proton acceptor.

Belongs to the peptidase C19 family. USP12/USP46 subfamily. Interacts with WDR48. Interacts with WDR20; this interaction promotes translocation of the USP12 complex to the plasma membrane. Component of the USP12-WDR20-WDR48 deubiquitinating complex. Component of the USP12-DMWD-WDR48 deubiquitinating complex. Interacts with PHLPP1. Interacts with RBPJ. Interacts with CBP; this interaction blocks the acetyltransferase activity of CREBBP. Interacts with ITCH; the interaction is more efficient when both USP12 and WDR48/UAF1 are involved and may mediate recruitment of the USP12 deubiquitinating complex to Notch.

The protein resides in the nucleus. Its subcellular location is the cytoplasm. It localises to the cell membrane. It catalyses the reaction Thiol-dependent hydrolysis of ester, thioester, amide, peptide and isopeptide bonds formed by the C-terminal Gly of ubiquitin (a 76-residue protein attached to proteins as an intracellular targeting signal).. With respect to regulation, activated by interaction with WDR20, WDR48 and DMWD through different allosteric mechanisms. Functionally, deubiquitinating enzyme that plays various roles in the regulation of the immune response and inflammation. During TCR engagement and activation, translocates into the cytoplasm and deubiquitinates its substrates LAT and TRAT1 and prevents their lysosome-dependent degradation to stabilize the TCR signaling complex at the plasma membrane. Plays an essential role in the selective LPS-induced macrophage response through the activation of NF-kappa-B pathway. In addition, promotes that antiviral immune response through targeting DNA sensor IFI16 to inhibit its proteasome-dependent degradation. Participates in the interferon signaling pathway and antiviral response independently of its deubiquitinase activity by maintaining nuclear phosphorylated STAT1 levels via inhibition of its CREBBP-mediated acetylation and subsequent dephosphorylation. Plays an intrinsic role in promoting the differentiation, activation and proliferation of CD4(+) T-cell by activating the NF-kappa-B signaling pathway through deubiquitinating and stabilizing B-cell lymphoma/leukemia 10/BCL10. In myeloid-derived suppressor cells promotes the activation of the NF-kappa-B via deubiquitination and stabilization of RELA. Regulates the 'Lys-63'-linked polyubiquitin chains of BAX and thereby modulates the mitochondrial apoptotic process. Negative regulator of NOTCH signaling that specifically deubiquitinates non-activated NOTCH receptors to target them for lysosomal degradation; deubiquitination of NOTCH stimulates its transport form late endosomes to lysosomes. Protects neurons against HTT/huntingtin-induced polyglutamine expansion-dependent neurodegeneration through regulation of autophagic flux. This function is independent of deubiquitinase activity or of other components of the USP12-WDR20-WDR48 deubiquitinating complex. In complex with WDR48, acts as a potential tumor suppressor by positively regulating PHLPP1 stability. The polypeptide is Ubiquitin carboxyl-terminal hydrolase 12 (Rattus norvegicus (Rat)).